The primary structure comprises 508 residues: Carboxypeptidase Y homolog ARB_05721 (508 aa).

Positions 1-25 are cleaved as a signal peptide; the sequence is MELYLNMLSFWYILLATSFFGPSQA. Residues Asn-132 and Asn-169 are each glycosylated (N-linked (GlcNAc...) asparagine). The active site involves Ser-204. N-linked (GlcNAc...) asparagine glycosylation is present at Asn-268. Intrachain disulfides connect Cys-282/Cys-305, Cys-289/Cys-298, and Cys-332/Cys-338. Residue Asp-410 is part of the active site. Position 413 (Cys-413) interacts with substrate. A glycan (N-linked (GlcNAc...) asparagine) is linked at Asn-451. His-484 is an active-site residue. A substrate-binding site is contributed by Met-485.

Belongs to the peptidase S10 family.

The protein localises to the secreted. It catalyses the reaction Release of a C-terminal amino acid with broad specificity.. Involved in degradation of small peptides. The polypeptide is Carboxypeptidase Y homolog ARB_05721 (Arthroderma benhamiae (strain ATCC MYA-4681 / CBS 112371) (Trichophyton mentagrophytes)).